The chain runs to 780 residues: LPS-assembly protein LptD (780 aa).

The signal sequence occupies residues 1 to 24; sequence MKKRFPTLLATLIWTALYSQHTLA.

This sequence belongs to the LptD family. In terms of assembly, component of the lipopolysaccharide transport and assembly complex. Interacts with LptE and LptA.

It localises to the cell outer membrane. Its function is as follows. Together with LptE, is involved in the assembly of lipopolysaccharide (LPS) at the surface of the outer membrane. The chain is LPS-assembly protein LptD from Yersinia pestis bv. Antiqua (strain Antiqua).